Reading from the N-terminus, the 369-residue chain is Endophilin-A (369 aa).

Residues 18 to 248 (TEKMGGAEGT…LQEKRSEAES (231 aa)) enclose the BAR domain. Residues 227–247 (QCADVLRGLQETLQEKRSEAE) are a coiled coil. A disordered region spans residues 266–295 (GGGGGLNEDGTPSHISSSASPLPSPMRSPA). A compositionally biased stretch (low complexity) spans 277-294 (PSHISSSASPLPSPMRSP). An SH3 domain is found at 305 to 364 (QQQPCCQALYDFEPENPGELAFKENDIITLLNRVDDNWFEGAVNGRTGYFPQSYVQVQVP).

This sequence belongs to the endophilin family.

The protein localises to the cytoplasm. It is found in the membrane. Functionally, required presynaptically at the neuromuscular junction. Implicated in synaptic vesicle endocytosis. This is Endophilin-A from Drosophila erecta (Fruit fly).